The primary structure comprises 207 residues: UPF0319 protein VV1_2115 (207 aa).

Residues 1–18 (MLRVLGLAGMLMSFNIHA) form the signal peptide.

Belongs to the UPF0319 family.

This Vibrio vulnificus (strain CMCP6) protein is UPF0319 protein VV1_2115.